The chain runs to 151 residues: Small ribosomal subunit protein uS9 (151 aa).

The protein belongs to the universal ribosomal protein uS9 family.

This is Small ribosomal subunit protein uS9 (rps9) from Aeropyrum pernix (strain ATCC 700893 / DSM 11879 / JCM 9820 / NBRC 100138 / K1).